We begin with the raw amino-acid sequence, 103 residues long: Large ribosomal subunit protein bL21 (103 aa).

This sequence belongs to the bacterial ribosomal protein bL21 family. As to quaternary structure, part of the 50S ribosomal subunit. Contacts protein L20.

Its function is as follows. This protein binds to 23S rRNA in the presence of protein L20. In Saccharophagus degradans (strain 2-40 / ATCC 43961 / DSM 17024), this protein is Large ribosomal subunit protein bL21.